Consider the following 925-residue polypeptide: Isoleucine--tRNA ligase (925 aa).

Positions 57–67 match the 'HIGH' region motif; sequence PYANGDIHIGH. Glu553 is a binding site for L-isoleucyl-5'-AMP. A 'KMSKS' region motif is present at residues 594–598; sequence KMSKS. Residue Lys597 participates in ATP binding. Cys889, Cys892, Cys909, and Cys912 together coordinate Zn(2+).

This sequence belongs to the class-I aminoacyl-tRNA synthetase family. IleS type 1 subfamily. As to quaternary structure, monomer. Requires Zn(2+) as cofactor.

The protein resides in the cytoplasm. The catalysed reaction is tRNA(Ile) + L-isoleucine + ATP = L-isoleucyl-tRNA(Ile) + AMP + diphosphate. Catalyzes the attachment of isoleucine to tRNA(Ile). As IleRS can inadvertently accommodate and process structurally similar amino acids such as valine, to avoid such errors it has two additional distinct tRNA(Ile)-dependent editing activities. One activity is designated as 'pretransfer' editing and involves the hydrolysis of activated Val-AMP. The other activity is designated 'posttransfer' editing and involves deacylation of mischarged Val-tRNA(Ile). This is Isoleucine--tRNA ligase from Brevibacillus brevis (strain 47 / JCM 6285 / NBRC 100599).